Consider the following 179-residue polypeptide: Large ribosomal subunit protein uL5 (179 aa).

This sequence belongs to the universal ribosomal protein uL5 family. Part of the 50S ribosomal subunit; part of the 5S rRNA/L5/L18/L25 subcomplex. Contacts the 5S rRNA and the P site tRNA. Forms a bridge to the 30S subunit in the 70S ribosome.

Its function is as follows. This is one of the proteins that bind and probably mediate the attachment of the 5S RNA into the large ribosomal subunit, where it forms part of the central protuberance. In the 70S ribosome it contacts protein S13 of the 30S subunit (bridge B1b), connecting the 2 subunits; this bridge is implicated in subunit movement. Contacts the P site tRNA; the 5S rRNA and some of its associated proteins might help stabilize positioning of ribosome-bound tRNAs. This is Large ribosomal subunit protein uL5 from Francisella tularensis subsp. mediasiatica (strain FSC147).